The primary structure comprises 159 residues: Putative viral CXC chemokine 2 (159 aa).

2 cysteine pairs are disulfide-bonded: cysteine 50–cysteine 77 and cysteine 52–cysteine 93.

This sequence belongs to the intercrine alpha (chemokine CxC) family.

In Human cytomegalovirus (strain Merlin) (HHV-5), this protein is Putative viral CXC chemokine 2 (UL147).